An 81-amino-acid polypeptide reads, in one-letter code: Weak neurotoxin OH-72 (81 aa).

A signal peptide spans 1-16; sequence LTLVVVTIVCLDLGYT. Cystine bridges form between Cys-19/Cys-40, Cys-22/Cys-27, Cys-33/Cys-58, Cys-62/Cys-73, and Cys-74/Cys-79.

It belongs to the three-finger toxin family. Ancestral subfamily. Orphan group II sub-subfamily. In terms of tissue distribution, expressed by the venom gland.

It localises to the secreted. Functionally, binds with low affinity to muscular (alpha-1-beta-1-delta-epsilon/CHRNA1-CHRNB1-CHRND-CHRNE) and very low affinity to neuronal (alpha-7/CHRNA7) nicotinic acetylcholine receptor (nAChR). This chain is Weak neurotoxin OH-72, found in Ophiophagus hannah (King cobra).